The chain runs to 457 residues: Fibrinogen C domain-containing protein 1-B (457 aa).

The tract at residues 1–21 (MGSDRWKNIRGTPQMEDSVQE) is disordered. Residues 1 to 33 (MGSDRWKNIRGTPQMEDSVQEKSQRKGCGYILC) are Cytoplasmic-facing. Residues 34 to 54 (TVLLSVAVLLAVTVTGAVLFM) traverse the membrane as a helical; Signal-anchor for type II membrane protein segment. Residues 55–457 (NQYHAPSTEP…MKIRPQREEN (403 aa)) lie on the Extracellular side of the membrane. The Fibrinogen C-terminal domain occupies 231 to 454 (CANGSKPRDC…FTEMKIRPQR (224 aa)). An N-linked (GlcNAc...) asparagine glycan is attached at N233. A disulfide bridge connects residues C240 and C269. N-linked (GlcNAc...) asparagine glycosylation occurs at N336. 2 residues coordinate Ca(2+): D389 and D391. A disulfide bridge connects residues C397 and C410.

In terms of assembly, homotetramer; disulfide-linked.

It is found in the membrane. In terms of biological role, acetyl group-binding receptor which shows a calcium-dependent binding to acetylated structures such as chitin, some N-acetylated carbohydrates, and amino acids. The polypeptide is Fibrinogen C domain-containing protein 1-B (fibcd1-b) (Xenopus laevis (African clawed frog)).